The following is a 40-amino-acid chain: Submaxillary gland androgen-regulated protein 2, isoform epsilon (40 aa).

The N-terminal stretch at 1–20 is a signal peptide; the sequence is MKALYMVFVLWVLIGCFLRC.

The protein resides in the secreted. May play a role in protection or detoxification. The protein is Submaxillary gland androgen-regulated protein 2, isoform epsilon (Smr2) of Mus musculus (Mouse).